Here is a 142-residue protein sequence, read N- to C-terminus: Large ribosomal subunit protein uL11 (142 aa).

It belongs to the universal ribosomal protein uL11 family. Part of the ribosomal stalk of the 50S ribosomal subunit. Interacts with L10 and the large rRNA to form the base of the stalk. L10 forms an elongated spine to which L12 dimers bind in a sequential fashion forming a multimeric L10(L12)X complex. In terms of processing, one or more lysine residues are methylated.

Forms part of the ribosomal stalk which helps the ribosome interact with GTP-bound translation factors. The protein is Large ribosomal subunit protein uL11 of Methylocella silvestris (strain DSM 15510 / CIP 108128 / LMG 27833 / NCIMB 13906 / BL2).